A 272-amino-acid chain; its full sequence is Ribosomal RNA small subunit methyltransferase A (272 aa).

Residues Asn18, Leu20, Gly45, Glu66, Asp91, and Asn113 each contribute to the S-adenosyl-L-methionine site.

It belongs to the class I-like SAM-binding methyltransferase superfamily. rRNA adenine N(6)-methyltransferase family. RsmA subfamily.

It localises to the cytoplasm. It carries out the reaction adenosine(1518)/adenosine(1519) in 16S rRNA + 4 S-adenosyl-L-methionine = N(6)-dimethyladenosine(1518)/N(6)-dimethyladenosine(1519) in 16S rRNA + 4 S-adenosyl-L-homocysteine + 4 H(+). Specifically dimethylates two adjacent adenosines (A1518 and A1519) in the loop of a conserved hairpin near the 3'-end of 16S rRNA in the 30S particle. May play a critical role in biogenesis of 30S subunits. This is Ribosomal RNA small subunit methyltransferase A from Yersinia pseudotuberculosis serotype O:1b (strain IP 31758).